Consider the following 294-residue polypeptide: 4-hydroxy-tetrahydrodipicolinate synthase (294 aa).

Residue T45 coordinates pyruvate. Y133 (proton donor/acceptor) is an active-site residue. The active-site Schiff-base intermediate with substrate is K161. I203 is a binding site for pyruvate.

The protein belongs to the DapA family. Homotetramer; dimer of dimers.

The protein localises to the cytoplasm. The enzyme catalyses L-aspartate 4-semialdehyde + pyruvate = (2S,4S)-4-hydroxy-2,3,4,5-tetrahydrodipicolinate + H2O + H(+). It participates in amino-acid biosynthesis; L-lysine biosynthesis via DAP pathway; (S)-tetrahydrodipicolinate from L-aspartate: step 3/4. Functionally, catalyzes the condensation of (S)-aspartate-beta-semialdehyde [(S)-ASA] and pyruvate to 4-hydroxy-tetrahydrodipicolinate (HTPA). In Shewanella pealeana (strain ATCC 700345 / ANG-SQ1), this protein is 4-hydroxy-tetrahydrodipicolinate synthase.